The sequence spans 576 residues: Sulfite reductase [NADPH] hemoprotein beta-component (576 aa).

4 residues coordinate [4Fe-4S] cluster: C435, C441, C480, and C484. C484 is a siroheme binding site.

This sequence belongs to the nitrite and sulfite reductase 4Fe-4S domain family. As to quaternary structure, alpha(8)-beta(8). The alpha component is a flavoprotein, the beta component is a hemoprotein. Siroheme is required as a cofactor. It depends on [4Fe-4S] cluster as a cofactor.

It carries out the reaction hydrogen sulfide + 3 NADP(+) + 3 H2O = sulfite + 3 NADPH + 4 H(+). Its pathway is sulfur metabolism; hydrogen sulfide biosynthesis; hydrogen sulfide from sulfite (NADPH route): step 1/1. Component of the sulfite reductase complex that catalyzes the 6-electron reduction of sulfite to sulfide. This is one of several activities required for the biosynthesis of L-cysteine from sulfate. This chain is Sulfite reductase [NADPH] hemoprotein beta-component, found in Yersinia pestis bv. Antiqua (strain Antiqua).